A 568-amino-acid chain; its full sequence is Peroxisomal leader peptide-processing protease (568 aa).

The segment at 332–568 is serine protease; it reads TPRGLPLRDL…PLSEVPRSKL (237 aa). Residues H374, D410, and S483 each act as charge relay system in the active site.

The protein belongs to the peptidase S1B family. Homodimer. Forms a heterodimer with the C-terminal cleavage product (49 kDa form). Forms a heterodimer with the N-terminal cleavage product (10 kDa form). Interacts with PEX5. Interacts with LONP2. In terms of processing, self-cleavage gives rise to an N-terminal 10-kDa fragment and C-terminal 49-kDa fragment upon import into the peroxisomes. The full-lengh TYSND1 is the active the proteolytic processing of PTS1- and PTS2-proteins and in self-cleavage, and intermolecular self-cleavage of TYSND1 down-regulates its protease activity.

It localises to the peroxisome. With respect to regulation, inhibited by N-ethylmaleimide (NEM). Not affected by leupeptin or trans-epoxysuccinyl-l-leucylamido-(4-gianidino) butane (E64). Its function is as follows. Peroxisomal protease that mediates both the removal of the leader peptide from proteins containing a PTS2 target sequence and processes several PTS1-containing proteins. Catalyzes the processing of PTS1-proteins involved in the peroxisomal beta-oxidation of fatty acids. In Mus musculus (Mouse), this protein is Peroxisomal leader peptide-processing protease (Tysnd1).